Here is a 258-residue protein sequence, read N- to C-terminus: Thiazole synthase 2 (258 aa).

Residue Lys97 is the Schiff-base intermediate with DXP of the active site. Residues Gly158, Ala184–Gly185, and Asn206–Thr207 each bind 1-deoxy-D-xylulose 5-phosphate.

The protein belongs to the ThiG family. As to quaternary structure, homotetramer. Forms heterodimers with either ThiH or ThiS.

It localises to the cytoplasm. It carries out the reaction [ThiS sulfur-carrier protein]-C-terminal-Gly-aminoethanethioate + 2-iminoacetate + 1-deoxy-D-xylulose 5-phosphate = [ThiS sulfur-carrier protein]-C-terminal Gly-Gly + 2-[(2R,5Z)-2-carboxy-4-methylthiazol-5(2H)-ylidene]ethyl phosphate + 2 H2O + H(+). The protein operates within cofactor biosynthesis; thiamine diphosphate biosynthesis. Functionally, catalyzes the rearrangement of 1-deoxy-D-xylulose 5-phosphate (DXP) to produce the thiazole phosphate moiety of thiamine. Sulfur is provided by the thiocarboxylate moiety of the carrier protein ThiS. In vitro, sulfur can be provided by H(2)S. The protein is Thiazole synthase 2 of Syntrophotalea carbinolica (strain DSM 2380 / NBRC 103641 / GraBd1) (Pelobacter carbinolicus).